Reading from the N-terminus, the 413-residue chain is Pyruvate dehydrogenase complex subunit homolog DDB_G0271564, mitochondrial (413 aa).

A mitochondrion-targeting transit peptide spans methionine 1–tyrosine 19. Residues tyrosine 29 to isoleucine 67 form the Peripheral subunit-binding (PSBD) domain.

This sequence belongs to the 2-oxoacid dehydrogenase family.

Its subcellular location is the mitochondrion. The pyruvate dehydrogenase complex catalyzes the overall conversion of pyruvate to acetyl-CoA and CO(2). It contains multiple copies of three enzymatic components: pyruvate dehydrogenase (E1), dihydrolipoamide acetyltransferase (E2) and lipoamide dehydrogenase (E3). This is Pyruvate dehydrogenase complex subunit homolog DDB_G0271564, mitochondrial (pdhX) from Dictyostelium discoideum (Social amoeba).